The primary structure comprises 181 residues: Regulator of G-protein signaling 5 (181 aa).

Residues 64 to 180 enclose the RGS domain; it reads SLDKLLQSNY…VRSEFYKELI (117 aa).

The protein localises to the cytoplasm. It localises to the membrane. Inhibits signal transduction by increasing the GTPase activity of G protein alpha subunits thereby driving them into their inactive GDP-bound form. Binds to G(i)-alpha and G(o)-alpha, but not to G(s)-alpha. This chain is Regulator of G-protein signaling 5 (Rgs5), found in Rattus norvegicus (Rat).